The chain runs to 403 residues: MARCPACASPRTVFHEELGTLSIAHMDCDAFYASVEKRDDPSLRDLPVIIGGGKRGVVTTACYIARMSGAKSAMPMFKALKLCPDAVVIKPNFAKYKEESRRIHEKLDRLTPLIQPLSLDEAWIDLTGTERLHGATPAQMLARLQAEIERDIGLTVSVGLAPNKFLAKIASELDKPRGFSAIGAAEAQSFLANKPVNILPGVGPATVASLAEIGLRTVGDIAAADLKLLANRLGSGGMRLHRLAHGQDSRIVDPDQARKTISAETTFNDDLHKREDLEDELWPLCEKVAKQARQEGVAGRVATLKLRTPDFKIHTRRRTLAVPTQTARTLFQVARELLSAEPRGLAYRLIGAGLTEFVDADTAGADMFADEERRALKSETAIDALRGKFGAAAVVTGRALKGR.

The UmuC domain occupies isoleucine 23–glycine 203. The Mg(2+) site is built by aspartate 27 and aspartate 120. The active site involves glutamate 121.

The protein belongs to the DNA polymerase type-Y family. As to quaternary structure, monomer. Mg(2+) serves as cofactor.

It is found in the cytoplasm. The catalysed reaction is DNA(n) + a 2'-deoxyribonucleoside 5'-triphosphate = DNA(n+1) + diphosphate. In terms of biological role, poorly processive, error-prone DNA polymerase involved in untargeted mutagenesis. Copies undamaged DNA at stalled replication forks, which arise in vivo from mismatched or misaligned primer ends. These misaligned primers can be extended by PolIV. Exhibits no 3'-5' exonuclease (proofreading) activity. May be involved in translesional synthesis, in conjunction with the beta clamp from PolIII. The protein is DNA polymerase IV of Caulobacter vibrioides (strain ATCC 19089 / CIP 103742 / CB 15) (Caulobacter crescentus).